The primary structure comprises 343 residues: Aspartate carbamoyltransferase catalytic subunit (343 aa).

Over residues 1-14 (MTTDTTGRTGNPAA) the composition is skewed to polar residues. The segment at 1 to 20 (MTTDTTGRTGNPAATASPDR) is disordered. Carbamoyl phosphate contacts are provided by arginine 91 and threonine 92. Residue lysine 119 coordinates L-aspartate. Carbamoyl phosphate-binding residues include arginine 141, histidine 171, and glutamine 174. Positions 204 and 259 each coordinate L-aspartate. Carbamoyl phosphate is bound by residues glycine 300 and proline 301.

The protein belongs to the aspartate/ornithine carbamoyltransferase superfamily. ATCase family. In terms of assembly, heterododecamer (2C3:3R2) of six catalytic PyrB chains organized as two trimers (C3), and six regulatory PyrI chains organized as three dimers (R2).

It catalyses the reaction carbamoyl phosphate + L-aspartate = N-carbamoyl-L-aspartate + phosphate + H(+). The protein operates within pyrimidine metabolism; UMP biosynthesis via de novo pathway; (S)-dihydroorotate from bicarbonate: step 2/3. Its function is as follows. Catalyzes the condensation of carbamoyl phosphate and aspartate to form carbamoyl aspartate and inorganic phosphate, the committed step in the de novo pyrimidine nucleotide biosynthesis pathway. The polypeptide is Aspartate carbamoyltransferase catalytic subunit (Burkholderia lata (strain ATCC 17760 / DSM 23089 / LMG 22485 / NCIMB 9086 / R18194 / 383)).